An 896-amino-acid polypeptide reads, in one-letter code: Sodium/hydrogen exchanger 5 (896 aa).

The Cytoplasmic portion of the chain corresponds to 1-45; the sequence is MLRAALSLLALPLAGAAEEPTQKPESPGEPPPGLELFRWQWHEVE. Residues 46–66 form a helical membrane-spanning segment; sequence APYLVALWILVASLAKIVFHL. Over 67–73 the chain is Extracellular; that stretch reads SRKVTSL. A helical transmembrane segment spans residues 74-94; that stretch reads VPESCLLILLGLVLGGIVLAV. At 95 to 103 the chain is on the cytoplasmic side; sequence AKKAEYQLE. The chain crosses the membrane as a helical span at residues 104–124; sequence PGTFFLFLLPPIVLDSGYFMP. Residues 125 to 134 are Extracellular-facing; sequence SRLFFDNLGA. Residues 135–155 form a helical membrane-spanning segment; that stretch reads ILTYAVVGTLWNAFTTGAALW. At 156-173 the chain is on the cytoplasmic side; that stretch reads GLQQAGLVAPRVQAGLLD. A helical transmembrane segment spans residues 174 to 194; it reads FLLFGSLISAVDPVAVLAVFE. Residues 195-200 are Extracellular-facing; the sequence is EVHVNE. A glycan (N-linked (GlcNAc...) asparagine) is linked at Asn199. Residues 201-221 traverse the membrane as a helical segment; it reads TLFIIVFGESLLNDAVTVVLY. Over 222-246 the chain is Cytoplasmic; sequence KVCNSFVEMGSANVQATDYLKGVAS. A helical transmembrane segment spans residues 247–267; the sequence is LFVVSLGGAAVGLVFAFLLAL. The Extracellular portion of the chain corresponds to 268 to 276; sequence TTRFTKRVR. A helical membrane pass occupies residues 277–297; that stretch reads IIEPLLVFLLAYAAYLTAEMA. Over 298–331 the chain is Cytoplasmic; the sequence is SLSAILAVTMCGLGCKKYVEANISHKSRTTVKYT. A helical membrane pass occupies residues 332–352; it reads MKTLASCAETVIFMLLGISAV. Residues 353-360 lie on the Extracellular side of the membrane; it reads DSSKWAWD. A helical transmembrane segment spans residues 361 to 381; it reads SGLVLGTLIFILFFRALGVVL. At 382-398 the chain is on the cytoplasmic side; the sequence is QTWVLNQFRLVPLDKID. Residues 399–419 form a helical membrane-spanning segment; sequence QVVMSYGGLRGAVAFALVILL. Residues 420 to 428 are Extracellular-facing; sequence DRTKVPAKD. Residues 429 to 449 traverse the membrane as a helical segment; it reads YFVATTIVVVFFTVIVQGLTI. Residues 450 to 896 are Cytoplasmic-facing; that stretch reads KPLVKWLKVK…CIQFNRGSRL (447 aa). The required for interaction with ARRB2 stretch occupies residues 576-721; sequence GSGACLDLQV…SETEKEDDEG (146 aa). 3 disordered regions span residues 658-686, 701-720, and 818-864; these read TKSK…GKHR, ESEE…EDDE, and HPRG…QQQE. The span at 660–672 shows a compositional bias: basic residues; that stretch reads SKPRPRKTGRRKK. A compositionally biased stretch (polar residues) spans 854 to 864; it reads ESSADLPQQQE.

Belongs to the monovalent cation:proton antiporter 1 (CPA1) transporter (TC 2.A.36) family. In terms of assembly, interacts with CHP1 and CHP2. Interacts with ARRB2; facilitates the endocytosis of SLC9A5 from the plasma membrane. Interacts with RACK1; this interaction positively regulates SLC9A5 activity and promotes SLC9A5 localization to focal adhesions. Interacts with SCAMP2; this interaction regulates SLC9A5 cell-surface targeting and SLC9A5 activity. In terms of processing, phosphorylated by PRKAA2; promotes its accumulation at the cell surface. Phosphorylated by CSNK2A1 in a manner favoring its beta-arrestin binding and endocytosis. As to expression, mainly expressed in brain. Expressed in neurons of the central and peripheral nervous system. Expressed also in testis, spleen, and skeletal muscle.

The protein localises to the cell membrane. Its subcellular location is the recycling endosome membrane. The protein resides in the cell projection. It localises to the dendritic spine membrane. It is found in the synaptic cell membrane. The protein localises to the cell junction. Its subcellular location is the focal adhesion. It catalyses the reaction Na(+)(in) + H(+)(out) = Na(+)(out) + H(+)(in). With respect to regulation, ATP-depletion almost completely abolishes SLC9A5 activity. Inhibited by amiloride compounds. Its function is as follows. Plasma membrane Na(+)/H(+) antiporter. Mediates the electroneutral exchange of intracellular H(+) ions for extracellular Na(+) in 1:1 stoichiometry, thus regulating intracellular pH homeostasis, in particular in neural tissues. Acts as a negative regulator of dendritic spine growth. Plays a role in postsynaptic remodeling and signaling. Can also contribute to organellar pH regulation, with consequences for receptor tyrosine kinase trafficking. The protein is Sodium/hydrogen exchanger 5 of Homo sapiens (Human).